Reading from the N-terminus, the 123-residue chain is Small ribosomal subunit protein uS12cz/uS12cy (123 aa).

Belongs to the universal ribosomal protein uS12 family. In terms of assembly, part of the 30S ribosomal subunit.

It is found in the plastid. Its subcellular location is the chloroplast. In terms of biological role, with S4 and S5 plays an important role in translational accuracy. Located at the interface of the 30S and 50S subunits. The protein is Small ribosomal subunit protein uS12cz/uS12cy (rps12-A) of Populus alba (White poplar).